The sequence spans 6061 residues: Intermembrane lipid transfer protein vps13B (6061 aa).

In terms of domain architecture, Chorein N-terminal spans 2-115 (FESLVADIIA…QLELKRKKLE (114 aa)). Disordered stretches follow at residues 590–623 (PKYKRHQENKENKENQENQENENKNEINNNNNNK), 803–828 (DIKNSDNNNNNISDNINNNNNINNKN), 1386–1414 (QQQQQQEEEQQQKEEEQHGGEFDLQNVSS), 1604–1644 (SSNN…GTLS), 2747–2784 (QTNQNNQKNRNPFKFYDQSGASNNNNDNDNDEYDEDQE), 2950–2972 (GLNNSFDLNNSGGGNNNNNNSST), 3364–3401 (LNRNSNSDSDNEENHNNNQNNQNNIDDDDGDGDDDDDD), 3855–3876 (QQQQPIINGDYGGIDSNNRNKK), 4011–4068 (QQQQ…FKNN), 4107–4132 (ELEKKKRERKENSKSKSLVAPDRPDE), 4262–4297 (NSSNNNNNNNNNGLSASTSNNLNNTMNDSNNNYNGR), 4321–4442 (SQSI…TSPG), 4601–4631 (TSSPSSSSNKVNNNYNNMDDEEDKKISKKSL), 4753–4797 (NNNN…TQEF), 4861–4882 (NAGGSSHYSSNGSNGSFSSISQ), 5003–5030 (LATKGKDNNKDNSNNNNNNNNNNNDGIE), and 5372–5429 (NINN…IGQD). Over residues 595–614 (HQENKENKENQENQENENKN) the composition is skewed to basic and acidic residues. A compositionally biased stretch (basic and acidic residues) spans 1395-1406 (QQQKEEEQHGGE). Residues 2747–2756 (QTNQNNQKNR) are compositionally biased toward polar residues. The segment covering 2774 to 2784 (NDNDEYDEDQE) has biased composition (acidic residues). Positions 3388–3401 (IDDDDGDGDDDDDD) are enriched in acidic residues. Residues 4015 to 4024 (QEKEKEIEKE) are compositionally biased toward basic and acidic residues. Low complexity predominate over residues 4031 to 4040 (LKNNNNISIN). A compositionally biased stretch (acidic residues) spans 4041–4057 (DNDDDDDDDDNDNDENN). Positions 4058-4068 (NENYEFNFKNN) are enriched in low complexity. Basic and acidic residues predominate over residues 4107–4120 (ELEKKKRERKENSK). 2 stretches are compositionally biased toward low complexity: residues 4330–4383 (TTTT…VGSN) and 4399–4429 (NNNNNNNNNNNNNNNNNNNNNNNNNNNNNNN). Positions 4430–4441 (SNDNQVNFSTSP) are enriched in polar residues. Composition is skewed to low complexity over residues 4601-4617 (TSSPSSSSNKVNNNYNN) and 4753-4784 (NNNNNNNDVNNNNTNNNNNNNNNNNNNKSNEN). The span at 4785 to 4794 (SQDQPPSIKT) shows a compositional bias: polar residues. Composition is skewed to low complexity over residues 5013–5030 (DNSNNNNNNNNNNNDGIE) and 5372–5384 (NINNNNNNLNNDN). A compositionally biased stretch (basic and acidic residues) spans 5385-5409 (NKNKNNNDKNKNNDKNNKNNNDKNN). Over residues 5410–5421 (NDNNNNNNNNNN) the composition is skewed to low complexity.

The protein belongs to the VPS13 family.

The protein localises to the membrane. Functionally, mediates the transfer of lipids between membranes at organelle contact sites. This chain is Intermembrane lipid transfer protein vps13B (vps13B), found in Dictyostelium discoideum (Social amoeba).